Consider the following 559-residue polypeptide: MPKEKYDPPDPRRLYTIMSAEEVASGKKSHWTELEISGRVRSLSSSLWTLTHLTALHINNNNLSRIPPEIAKLPHLVYLNLSSNKLRSLPAELGNMVTLRELLLNNNCLRVLPYELGRLFQLQTLGLKGNPLSQDILNLYQEPDGTRKLLNYMLDNLAVHPEQLPQRPWITLRERDQMMPTAVFTVMCYNVLCDKYATRQLYGYCPSWALNWEYRKKGIMEEITNCDADIISLQEVETEQYYTFFLETLKDRGYDGFFCPKSRAKLVSEQERKHVDGCGVFFKTEKFALVQKHTVEFNQVAMANSEGSEVMLNRVMTKDNIGVAVLLEVKKDLFATGLKPPPEKQLLLVANAHMHWDPEYSDVKLIQTMMFLSELKSIAERASGSINSSSPTSETSSIPIVLCADLNSLPDSGVVEYLSNGGVAENHKDFKELRYSDCLTNFSCNGKNGKPDGSITHSFQLKSAYEGNLMPYTNYTYDFKGVIDYIFFSKTHMSVLGVLGPLETQWLKDNNITGCPHPHIPSDHFSLLAQLEYHPPLPPLNGLHLPVHSTACESKMLTE.

Residues 1–148 (MPKEKYDPPD…LYQEPDGTRK (148 aa)) form a required for interaction with cnot1, cnot3 and cnot7 region. The tract at residues 1–550 (MPKEKYDPPD…NGLHLPVHST (550 aa)) is nuclease domain. 4 LRR repeats span residues 52–73 (HLTA…IAKL), 75–96 (HLVY…LGNM), 98–120 (TLRE…GRLF), and 121–143 (QLQT…YQEP). Glu235 serves as a coordination point for Mg(2+). Glu235, Glu271, His353, and Pro358 together coordinate substrate. Residue Asp405 coordinates Mg(2+). The Proton donor/acceptor role is filled by Asp405. Residues Asn407, Asn474, and Phe479 each contribute to the substrate site.

This sequence belongs to the CCR4/nocturin family. As to quaternary structure, component of the CCR4-NOT complex. It depends on Mg(2+) as a cofactor.

The protein resides in the cytoplasm. The protein localises to the nucleus. The enzyme catalyses Exonucleolytic cleavage of poly(A) to 5'-AMP.. Its function is as follows. Poly(A) nuclease with 3'-5' RNase activity. Catalytic component of the CCR4-NOT complex which is one of the major cellular mRNA deadenylases and is linked to various cellular processes including bulk mRNA degradation, miRNA-mediated repression, translational repression during translational initiation and general transcription regulation. Additional complex functions may be a consequence of its influence on mRNA expression. In Danio rerio (Zebrafish), this protein is CCR4-NOT transcription complex subunit 6-like (cnot6l).